The primary structure comprises 61 residues: uncharacterized protein (61 aa).

The stretch at 10–61 (YEEENDNEDFEEEVELSREDLNQIINELAPFLIKLLTDLTELTQKKEESENE) forms a coiled coil.

This is an uncharacterized protein from Acidianus bottle-shaped virus (isolate Italy/Pozzuoli) (ABV).